A 469-amino-acid chain; its full sequence is 3-isopropylmalate dehydratase large subunit (469 aa).

Cys-347, Cys-408, and Cys-411 together coordinate [4Fe-4S] cluster.

The protein belongs to the aconitase/IPM isomerase family. LeuC type 1 subfamily. Heterodimer of LeuC and LeuD. [4Fe-4S] cluster serves as cofactor.

It carries out the reaction (2R,3S)-3-isopropylmalate = (2S)-2-isopropylmalate. The protein operates within amino-acid biosynthesis; L-leucine biosynthesis; L-leucine from 3-methyl-2-oxobutanoate: step 2/4. Functionally, catalyzes the isomerization between 2-isopropylmalate and 3-isopropylmalate, via the formation of 2-isopropylmaleate. The protein is 3-isopropylmalate dehydratase large subunit of Histophilus somni (strain 129Pt) (Haemophilus somnus).